We begin with the raw amino-acid sequence, 483 residues long: Probable cytochrome P450 517A1 (483 aa).

Residues 1 to 21 (MEIINVFLFLIILFLVKDFVK) traverse the membrane as a helical segment. A heme-binding site is contributed by C429.

It belongs to the cytochrome P450 family. It depends on heme as a cofactor.

It is found in the membrane. The protein is Probable cytochrome P450 517A1 (cyp517A1) of Dictyostelium discoideum (Social amoeba).